Here is a 198-residue protein sequence, read N- to C-terminus: Mitrocomin (198 aa).

Positions M1–A8 are excised as a propeptide. EF-hand domains follow at residues K19–K54, D118–Q147, and Q148–S183. Ca(2+) is bound by residues D32, N34, N36, Q38, E43, D125, D127, N129, S131, E136, D161, D163, D165, K167, and E172.

It belongs to the aequorin family.

Its function is as follows. Ca(2+)-dependent bioluminescence photoprotein. Displays an emission peak at 470 nm (blue light). Trace amounts of calcium ion trigger the intramolecular oxidation of the chromophore, coelenterazine into coelenteramide and CO(2) with the concomitant emission of light. This chain is Mitrocomin (MI17), found in Mitrocoma cellularia (Cross jellyfish).